The sequence spans 264 residues: S-adenosylmethionine decarboxylase proenzyme (264 aa).

The Schiff-base intermediate with substrate; via pyruvic acid role is filled by Ser-112. Ser-112 carries the pyruvic acid (Ser); by autocatalysis modification. Catalysis depends on His-117, which acts as the Proton acceptor; for processing activity. The Proton donor; for catalytic activity role is filled by Cys-140.

The protein belongs to the prokaryotic AdoMetDC family. Type 2 subfamily. In terms of assembly, heterooctamer of four alpha and four beta chains arranged as a tetramer of alpha/beta heterodimers. Requires pyruvate as cofactor. Post-translationally, is synthesized initially as an inactive proenzyme. Formation of the active enzyme involves a self-maturation process in which the active site pyruvoyl group is generated from an internal serine residue via an autocatalytic post-translational modification. Two non-identical subunits are generated from the proenzyme in this reaction, and the pyruvate is formed at the N-terminus of the alpha chain, which is derived from the carboxyl end of the proenzyme. The post-translation cleavage follows an unusual pathway, termed non-hydrolytic serinolysis, in which the side chain hydroxyl group of the serine supplies its oxygen atom to form the C-terminus of the beta chain, while the remainder of the serine residue undergoes an oxidative deamination to produce ammonia and the pyruvoyl group blocking the N-terminus of the alpha chain.

It catalyses the reaction S-adenosyl-L-methionine + H(+) = S-adenosyl 3-(methylsulfanyl)propylamine + CO2. The protein operates within amine and polyamine biosynthesis; S-adenosylmethioninamine biosynthesis; S-adenosylmethioninamine from S-adenosyl-L-methionine: step 1/1. Catalyzes the decarboxylation of S-adenosylmethionine to S-adenosylmethioninamine (dcAdoMet), the propylamine donor required for the synthesis of the polyamines spermine and spermidine from the diamine putrescine. The sequence is that of S-adenosylmethionine decarboxylase proenzyme from Pectobacterium atrosepticum (strain SCRI 1043 / ATCC BAA-672) (Erwinia carotovora subsp. atroseptica).